A 1109-amino-acid chain; its full sequence is Hybrid signal transduction histidine kinase F (1109 aa).

The region spanning 237 to 289 is the PAC domain; that stretch reads LSTETTITKKNGEKYPAEVFVKEISDIHSNSIGIMIIVRDITDQIRLKEMNIE. Residues 324–547 enclose the Histidine kinase domain; that stretch reads TISHEIRTPL…LFSVTLNFEQ (224 aa). At His-327 the chain carries Phosphohistidine; by autocatalysis. Positions 719–760 form a coiled coil; the sequence is SNLIQTISQIDNQQQQQQQQLQQQEQEQQHQQQQLQQEQQFV. Over residues 739–758 the composition is skewed to low complexity; that stretch reads LQQQEQEQQHQQQQLQQEQQ. The disordered stretch occupies residues 739–819; the sequence is LQQQEQEQQH…TSSDSGESDE (81 aa). Residues 767–782 are compositionally biased toward basic and acidic residues; that stretch reads DSSEKKTTPKKDRGKY. In terms of domain architecture, Response regulatory spans 928-1048; sequence RILLVDDNAV…PLGELVKKYL (121 aa). Position 977 is a 4-aspartylphosphate (Asp-977). The segment covering 1052–1099 has biased composition (low complexity); it reads NNNNNNNNNNNNNNNNNSNNNNSNSNSNPNSNSNSNSNSNSNPNQNPN. The tract at residues 1052–1109 is disordered; the sequence is NNNNNNNNNNNNNNNNNSNNNNSNSNSNPNSNSNSNSNSNSNPNQNPNYCNNLPTDFI. Residues 1100–1109 show a composition bias toward polar residues; the sequence is YCNNLPTDFI.

The enzyme catalyses ATP + protein L-histidine = ADP + protein N-phospho-L-histidine.. In terms of biological role, acts as a receptor histidine kinase for a signal transduction pathway. This protein undergoes an ATP-dependent autophosphorylation at a conserved histidine residue in the kinase core, and a phosphoryl group is then transferred to a conserved aspartate residue in the receiver domain. This is Hybrid signal transduction histidine kinase F (dhkF) from Dictyostelium discoideum (Social amoeba).